Reading from the N-terminus, the 493-residue chain is Glutamyl-tRNA(Gln) amidotransferase subunit A (493 aa).

Residues lysine 78 and serine 158 each act as charge relay system in the active site. The active-site Acyl-ester intermediate is serine 182.

It belongs to the amidase family. GatA subfamily. As to quaternary structure, heterotrimer of A, B and C subunits.

It catalyses the reaction L-glutamyl-tRNA(Gln) + L-glutamine + ATP + H2O = L-glutaminyl-tRNA(Gln) + L-glutamate + ADP + phosphate + H(+). Functionally, allows the formation of correctly charged Gln-tRNA(Gln) through the transamidation of misacylated Glu-tRNA(Gln) in organisms which lack glutaminyl-tRNA synthetase. The reaction takes place in the presence of glutamine and ATP through an activated gamma-phospho-Glu-tRNA(Gln). This chain is Glutamyl-tRNA(Gln) amidotransferase subunit A, found in Rickettsia africae (strain ESF-5).